The sequence spans 132 residues: UPF0719 inner membrane protein YjfL (132 aa).

At 1-6 (MHILDS) the chain is on the periplasmic side. The chain crosses the membrane as a helical span at residues 7-27 (LLAFSAYFFIGVAMVIIFLFI). Topologically, residues 28–46 (YSKITPHNEWQLIKNNNTA) are cytoplasmic. The chain crosses the membrane as a helical span at residues 47 to 67 (ASLAFSGTLLGYVIPLSSAAI). Topologically, residues 68 to 71 (NAVS) are periplasmic. A helical transmembrane segment spans residues 72–92 (IPDYFAWGGIALVIQLLVFAG). Topologically, residues 93–109 (VRLYMPALSEKIINHNT) are cytoplasmic. Residues 110–130 (AAGMFMGTAALAGGIFNAACM) traverse the membrane as a helical segment. Topologically, residues 131 to 132 (TW) are periplasmic.

Belongs to the UPF0719 family.

The protein resides in the cell inner membrane. In Escherichia coli O157:H7, this protein is UPF0719 inner membrane protein YjfL (yjfL).